We begin with the raw amino-acid sequence, 279 residues long: Acetyl-coenzyme A carboxylase carboxyl transferase subunit beta (279 aa).

Residues L23 to V279 enclose the CoA carboxyltransferase N-terminal domain. Zn(2+)-binding residues include C27, C30, C46, and C49. The C4-type zinc finger occupies C27–C49.

Belongs to the AccD/PCCB family. As to quaternary structure, acetyl-CoA carboxylase is a heterohexamer composed of biotin carboxyl carrier protein (AccB), biotin carboxylase (AccC) and two subunits each of ACCase subunit alpha (AccA) and ACCase subunit beta (AccD). Zn(2+) is required as a cofactor.

The protein localises to the cytoplasm. The enzyme catalyses N(6)-carboxybiotinyl-L-lysyl-[protein] + acetyl-CoA = N(6)-biotinyl-L-lysyl-[protein] + malonyl-CoA. It functions in the pathway lipid metabolism; malonyl-CoA biosynthesis; malonyl-CoA from acetyl-CoA: step 1/1. In terms of biological role, component of the acetyl coenzyme A carboxylase (ACC) complex. Biotin carboxylase (BC) catalyzes the carboxylation of biotin on its carrier protein (BCCP) and then the CO(2) group is transferred by the transcarboxylase to acetyl-CoA to form malonyl-CoA. The chain is Acetyl-coenzyme A carboxylase carboxyl transferase subunit beta from Pelodictyon phaeoclathratiforme (strain DSM 5477 / BU-1).